Here is a 433-residue protein sequence, read N- to C-terminus: 23S rRNA (uracil(1939)-C(5))-methyltransferase RlmD (433 aa).

Residues 10–68 (RTTTRQIITVSVNDLDSFGQGVARHNGKTLFIPGLLPQENAEVTVTEDKKQYARAKVVR) form the TRAM domain. The [4Fe-4S] cluster site is built by cysteine 81, cysteine 87, cysteine 90, and cysteine 162. S-adenosyl-L-methionine-binding residues include glutamine 265, phenylalanine 294, asparagine 299, glutamate 315, asparagine 342, and aspartate 363. The active-site Nucleophile is cysteine 389.

This sequence belongs to the class I-like SAM-binding methyltransferase superfamily. RNA M5U methyltransferase family. RlmD subfamily.

It carries out the reaction uridine(1939) in 23S rRNA + S-adenosyl-L-methionine = 5-methyluridine(1939) in 23S rRNA + S-adenosyl-L-homocysteine + H(+). Functionally, catalyzes the formation of 5-methyl-uridine at position 1939 (m5U1939) in 23S rRNA. The protein is 23S rRNA (uracil(1939)-C(5))-methyltransferase RlmD of Escherichia coli O6:K15:H31 (strain 536 / UPEC).